Consider the following 440-residue polypeptide: C-terminal-binding protein 1 (440 aa).

Residues 1–70 (MGSSHLLNKG…EIHEKVLNEA (70 aa)) form an interaction with GLIS2 1 region. Residues serine 100, 180-185 (IGLGRV), aspartate 204, 237-243 (CGLNEHN), 264-266 (TAR), and aspartate 290 contribute to the NAD(+) site. Residue arginine 266 is part of the active site. The interaction with GLIS2 2 stretch occupies residues 288 to 360 (ALDVHESEPF…VNKDHLTAAT (73 aa)). Glutamate 295 is a catalytic residue. At serine 300 the chain carries Phosphoserine. The active-site Proton donor is the histidine 315. An NAD(+)-binding site is contributed by 315-318 (HAAW). A disordered region spans residues 408–440 (SHGLPPVAHPPHAPSPGQTVKPEADRDHASDQL). At serine 422 the chain carries Phosphoserine; by HIPK2. Lysine 428 is covalently cross-linked (Glycyl lysine isopeptide (Lys-Gly) (interchain with G-Cter in SUMO)). Over residues 429-440 (PEADRDHASDQL) the composition is skewed to basic and acidic residues.

Belongs to the D-isomer specific 2-hydroxyacid dehydrogenase family. In terms of assembly, homo- or heterodimer. Heterodimer with CTBP2. Interacts with PRDM16; the interaction represses white adipose tissue (WAT)-specific genes expression. Interacts with GLIS2, FOXP2, HDAC4, HDAC5, HDAC9 and ZNF217. Interacts with ELK3 (via its PXDLS motif). Interacts with RBBP8 (via its PXDLS motif); the interaction is disrupted by binding to adenovirus E1A. Interacts with FOXP1, HIPK2, PNN, NRIP1, MECOM, ZFHX1B and WIZ. Interacts with ZNF366 (via PXDLS motif). Interaction with SATB1 (non-acetylated form); the interaction stabilizes its attachment to DNA and promotes transcription repression. Interacts with BCL6; the interaction is required for BCL6 transcriptional autoinhibition and inhibition of some BCL6 target genes. Interacts with IKZF4. Interacts with MCRIP1 (unphosphorylated form, via the PXDLS motif); competitively inhibiting CTBP-ZEB1 interaction. Interacts with Bassoon/BSN; this interaction targets and anchors CTBP1 to presynapses. Interacts with SIMC1. As to quaternary structure, (Microbial infection) Interacts with Epstein-Barr virus EBNA3. Interacts with Epstein-Barr virus EBNA6; this interaction leads to gene repression, but also seems to interfere with the repressive function of CtBP pre-bound to DNA, leading to EBNA6 mediated up-regulation of many cellular genes. (Microbial infection) Interacts with adenovirus E1A protein (via its C-terminus); the interaction disrupts the interaction of CTBP1 with RBBP8. In terms of assembly, (Microbial infection) Interacts with human adenovirus 5 E1A protein; this interaction seems to potentiate viral replication. Requires NAD(+) as cofactor. Post-translationally, the level of phosphorylation appears to be regulated during the cell cycle. Phosphorylation by HIPK2 on Ser-422 induces proteasomal degradation. ADP-ribosylated; when cells are exposed to brefeldin A. In terms of processing, sumoylation on Lys-428 is promoted by the E3 SUMO-protein ligase CBX4. In terms of tissue distribution, expressed in germinal center B-cells.

Its subcellular location is the cytoplasm. The protein localises to the nucleus. Functionally, corepressor targeting diverse transcription regulators such as GLIS2 or BCL6. Has dehydrogenase activity. Involved in controlling the equilibrium between tubular and stacked structures in the Golgi complex. Functions in brown adipose tissue (BAT) differentiation. This is C-terminal-binding protein 1 (CTBP1) from Homo sapiens (Human).